Here is a 1134-residue protein sequence, read N- to C-terminus: Vinculin (1134 aa).

Residues 1–835 (MPVFHTRTIE…GAVAKVREAF (835 aa)) are N-terminal globular head. Phosphoserine is present on Ser97. The segment at 168-208 (MTKMAKMIDERQQELTHQEHRVMLVNSMNTVKELLPVLISA) is talin-interaction. Lys173 carries the N6-acetyllysine modification. A run of 3 repeats spans residues 259 to 369 (ASKD…KVEN), 370 to 479 (AARK…KTNR), and 480 to 589 (AVAN…RMQE). Positions 259–589 (ASKDTEAMKR…LKDLKARMQE (331 aa)) are 3 X 112 AA tandem repeats. Phosphoserine is present on residues Ser260, Ser272, Ser275, Ser288, Ser290, Ser346, and Ser434. Position 496 is an N6-acetyllysine (Lys496). Tyr537 is modified (phosphotyrosine). 3 positions are modified to phosphoserine: Ser574, Ser579, and Ser600. Phosphothreonine occurs at positions 604 and 672. Position 721 is a phosphoserine (Ser721). Positions 741-764 (MANIQPQMLVAGATSIARRANRIL) are interaction with ACTN4. Residues Ser795 and Ser809 each carry the phosphoserine modification. Tyr822 carries the post-translational modification Phosphotyrosine. Residues 836 to 878 (QPQEPDFPPPPPDLEQLRLTDELAPPKPPLPEGEVPPPRPPPP) are linker (Pro-rich). Residues 857 to 887 (ELAPPKPPLPEGEVPPPRPPPPEEKDEEFPE) form a disordered region. Over residues 860-876 (PPKPPLPEGEVPPPRPP) the composition is skewed to pro residues. Residues 879–1134 (EEKDEEFPEQ…RWVRKTPWYQ (256 aa)) form a C-terminal tail region. Facilitates phospholipid membrane insertion stretches follow at residues 1003–1046 (RLVR…KRIR) and 1120–1134 (AGFTLRWVRKTPWYQ). A Phosphotyrosine; by SRC-type Tyr-kinases modification is found at Tyr1133.

The protein belongs to the vinculin/alpha-catenin family. Exhibits self-association properties. Part of a complex composed of THSD1, PTK2/FAK1, TLN1 and VCL. Interacts with APBB1IP and NRAP. Interacts with TLN1. Interacts with CTNNB1 and this interaction is necessary for its localization to the cell-cell junctions and for its function in regulating cell surface expression of E-cadherin. Interacts with SYNM. Interacts with SORBS1. Interacts with CTNNA1. Binds to ACTN4; this interaction triggers conformational changes. Interacts with FLII. As to quaternary structure, (Microbial infection) Interacts via its globular head domain with the central portion of S.flexneri IcsA (also called VirG). In terms of processing, phosphorylated; on serines, threonines and tyrosines. Phosphorylation on Tyr-1133 in activated platelets affects head-tail interactions and cell spreading but has no effect on actin binding nor on localization to focal adhesion plaques. Post-translationally, acetylated; mainly by myristic acid but also by a small amount of palmitic acid. Metavinculin is muscle-specific.

The protein localises to the cell membrane. Its subcellular location is the cell junction. It localises to the adherens junction. It is found in the focal adhesion. The protein resides in the cytoplasm. The protein localises to the cytoskeleton. Its subcellular location is the sarcolemma. It localises to the cell projection. It is found in the podosome. Actin filament (F-actin)-binding protein involved in cell-matrix adhesion and cell-cell adhesion. Regulates cell-surface E-cadherin expression and potentiates mechanosensing by the E-cadherin complex. May also play important roles in cell morphology and locomotion. The chain is Vinculin (VCL) from Homo sapiens (Human).